Reading from the N-terminus, the 152-residue chain is Small ribosomal subunit protein uS17A (152 aa).

It belongs to the universal ribosomal protein uS17 family. In terms of assembly, component of the small ribosomal subunit (SSU). Mature yeast ribosomes consist of a small (40S) and a large (60S) subunit. The 40S small subunit contains 1 molecule of ribosomal RNA (18S rRNA) and at least 33 different proteins. The large 60S subunit contains 3 rRNA molecules (25S, 5.8S and 5S rRNA) and at least 46 different proteins.

The protein localises to the cytoplasm. Its subcellular location is the nucleus. Functionally, component of the ribosome, a large ribonucleoprotein complex responsible for the synthesis of proteins in the cell. The small ribosomal subunit (SSU) binds messenger RNAs (mRNAs) and translates the encoded message by selecting cognate aminoacyl-transfer RNA (tRNA) molecules. The large subunit (LSU) contains the ribosomal catalytic site termed the peptidyl transferase center (PTC), which catalyzes the formation of peptide bonds, thereby polymerizing the amino acids delivered by tRNAs into a polypeptide chain. The nascent polypeptides leave the ribosome through a tunnel in the LSU and interact with protein factors that function in enzymatic processing, targeting, and the membrane insertion of nascent chains at the exit of the ribosomal tunnel. In Schizosaccharomyces pombe (strain 972 / ATCC 24843) (Fission yeast), this protein is Small ribosomal subunit protein uS17A (rps1101).